We begin with the raw amino-acid sequence, 297 residues long: tRNA pseudouridine synthase A (297 aa).

Asp57 functions as the Nucleophile in the catalytic mechanism. Position 115 (Tyr115) interacts with substrate.

The protein belongs to the tRNA pseudouridine synthase TruA family. As to quaternary structure, homodimer.

The catalysed reaction is uridine(38/39/40) in tRNA = pseudouridine(38/39/40) in tRNA. Functionally, formation of pseudouridine at positions 38, 39 and 40 in the anticodon stem and loop of transfer RNAs. The polypeptide is tRNA pseudouridine synthase A (Nitratidesulfovibrio vulgaris (strain ATCC 29579 / DSM 644 / CCUG 34227 / NCIMB 8303 / VKM B-1760 / Hildenborough) (Desulfovibrio vulgaris)).